Reading from the N-terminus, the 259-residue chain is Small ribosomal subunit protein uS2 (259 aa).

The protein belongs to the universal ribosomal protein uS2 family.

The protein is Small ribosomal subunit protein uS2 of Fervidobacterium nodosum (strain ATCC 35602 / DSM 5306 / Rt17-B1).